The chain runs to 122 residues: Large ribosomal subunit protein uL14 (122 aa).

It belongs to the universal ribosomal protein uL14 family. As to quaternary structure, part of the 50S ribosomal subunit. Forms a cluster with proteins L3 and L19. In the 70S ribosome, L14 and L19 interact and together make contacts with the 16S rRNA in bridges B5 and B8.

Binds to 23S rRNA. Forms part of two intersubunit bridges in the 70S ribosome. This Methylobacterium sp. (strain 4-46) protein is Large ribosomal subunit protein uL14.